The following is a 162-amino-acid chain: Nascent polypeptide-associated complex subunit beta (162 aa).

Disordered regions lie at residues 1-39 (MPVD…NISE) and 130-162 (EQAK…DNVE). A compositionally biased stretch (basic residues) spans 24–33 (TPRRPGKKVA). Positions 38 to 103 (SEDEKKLSAT…SQQKDIAELI (66 aa)) constitute an NAC-A/B domain. Residues 146-162 (GDDEIPNLVENFEDNVE) are compositionally biased toward acidic residues.

It belongs to the NAC-beta family. As to quaternary structure, part of the nascent polypeptide-associated complex (NAC), consisting of EGD2 and EGD1. NAC associates with ribosomes via EGD1.

It localises to the cytoplasm. Its subcellular location is the nucleus. Functionally, component of the nascent polypeptide-associated complex (NAC), a dynamic component of the ribosomal exit tunnel, protecting the emerging polypeptides from interaction with other cytoplasmic proteins to ensure appropriate nascent protein targeting. The NAC complex also promotes mitochondrial protein import by enhancing productive ribosome interactions with the outer mitochondrial membrane and blocks the inappropriate interaction of ribosomes translating non-secretory nascent polypeptides with translocation sites in the membrane of the endoplasmic reticulum. EGD1 may act as a transcription factor that exert a negative effect on the expression of several genes that are transcribed by RNA polymerase II. In Yarrowia lipolytica (strain CLIB 122 / E 150) (Yeast), this protein is Nascent polypeptide-associated complex subunit beta (EGD1).